A 489-amino-acid chain; its full sequence is Blue-light-activated histidine kinase (489 aa).

The region spanning 19–93 (ATDPFRAAVE…AIKSAIAAEK (75 aa)) is the PAS domain. Cys-69 carries the post-translational modification S-4a-FMN cysteine. 2 consecutive PAC domains span residues 93–147 (KPID…ELEK) and 232–281 (YSIE…NKAL). The HWE histidine kinase domain stretch occupies residues 259-341 (NPLVLGIVQD…LLKENWAGAT (83 aa)). His-288 carries the post-translational modification Phosphohistidine; by autocatalysis.

FMN binds covalently to cysteine after exposure to blue light and this bond is spontaneously broken in the dark.

The catalysed reaction is ATP + protein L-histidine = ADP + protein N-phospho-L-histidine.. Functionally, photosensitive kinase that is involved in increased bacterial virulence upon exposure to light. Once ejected from an infected animal host, sunlight acts as an environmental signal that increases the virulence of the bacterium, preparing it for infection of the next host. This photoreceptor protein is directly related to the bacterium's survival and replication within host macrophages, as it is required for optimal replication of bacteria inside macrophages. In Brucella abortus (strain 2308), this protein is Blue-light-activated histidine kinase.